The following is a 184-amino-acid chain: UPF0149 protein Pmen_0324 (184 aa).

The protein belongs to the UPF0149 family.

The sequence is that of UPF0149 protein Pmen_0324 from Ectopseudomonas mendocina (strain ymp) (Pseudomonas mendocina).